The chain runs to 504 residues: Glycerol kinase (504 aa).

Thr14 contributes to the ADP binding site. Residues Thr14, Thr15, and Ser16 each coordinate ATP. Thr14 contacts sn-glycerol 3-phosphate. Arg18 provides a ligand contact to ADP. The sn-glycerol 3-phosphate site is built by Arg84, Glu85, and Tyr136. Glycerol is bound by residues Arg84, Glu85, and Tyr136. Residue His232 is modified to Phosphohistidine; by HPr. A sn-glycerol 3-phosphate-binding site is contributed by Asp246. Residues Asp246 and Gln247 each coordinate glycerol. The ADP site is built by Thr268 and Gly311. ATP is bound by residues Thr268, Gly311, Gln315, and Gly412. 2 residues coordinate ADP: Gly412 and Asn416.

Belongs to the FGGY kinase family. As to quaternary structure, homotetramer and homodimer (in equilibrium). The phosphoenolpyruvate-dependent sugar phosphotransferase system (PTS), including enzyme I, and histidine-containing protein (HPr) are required for the phosphorylation, which leads to the activation of the enzyme.

The enzyme catalyses glycerol + ATP = sn-glycerol 3-phosphate + ADP + H(+). Its pathway is polyol metabolism; glycerol degradation via glycerol kinase pathway; sn-glycerol 3-phosphate from glycerol: step 1/1. Activated by phosphorylation and inhibited by fructose 1,6-bisphosphate (FBP). Functionally, key enzyme in the regulation of glycerol uptake and metabolism. Catalyzes the phosphorylation of glycerol to yield sn-glycerol 3-phosphate. The polypeptide is Glycerol kinase (Streptococcus pyogenes serotype M6 (strain ATCC BAA-946 / MGAS10394)).